Consider the following 120-residue polypeptide: Large ribosomal subunit protein bL17 (120 aa).

This sequence belongs to the bacterial ribosomal protein bL17 family. In terms of assembly, part of the 50S ribosomal subunit. Contacts protein L32.

The sequence is that of Large ribosomal subunit protein bL17 from Shouchella clausii (strain KSM-K16) (Alkalihalobacillus clausii).